Consider the following 383-residue polypeptide: Serine protease 23 (383 aa).

An N-terminal signal peptide occupies residues 1–19 (MAGIPGLLFLLFLLLCAVG). The N-linked (GlcNAc...) asparagine glycan is linked to Asn-93. The interval 108–127 (SSGGGAQHRDSGSSGKSRRK) is disordered. The residue at position 109 (Ser-109) is a Phosphoserine; by FAM20C. Cysteines 160 and 176 form a disulfide. The active-site Charge relay system is the His-175. Asn-207 is a glycosylation site (N-linked (GlcNAc...) asparagine). Active-site charge relay system residues include Asp-240 and Ser-316.

Belongs to the peptidase S1 family.

It localises to the secreted. The protein is Serine protease 23 (PRSS23) of Macaca mulatta (Rhesus macaque).